Reading from the N-terminus, the 97-residue chain is Apolipoprotein C-II (97 aa).

The first 22 residues, 1 to 22 (MGSRFFLALFLVLLVLGNEVQG), serve as a signal peptide directing secretion. The tract at residues 63-71 (SVDEKLRDM) is lipid binding. Residues 75–97 (SSAAMSTYAGIFTDQLLTLLKGE) are lipoprotein lipase cofactor.

This sequence belongs to the apolipoprotein C2 family. In terms of processing, proapolipoprotein C-II is synthesized as a sialic acid containing glycoprotein which is subsequently desialylated prior to its proteolytic processing. Post-translationally, proapolipoprotein C-II, the major form found in plasma undergoes proteolytic cleavage of its N-terminal hexapeptide to generate the mature form apolipoprotein C-II, which occurs as the minor form in plasma.

The protein resides in the secreted. Its function is as follows. Component of chylomicrons, very low-density lipoproteins (VLDL), low-density lipoproteins (LDL), and high-density lipoproteins (HDL) in plasma. Plays an important role in lipoprotein metabolism as an activator of lipoprotein lipase. The sequence is that of Apolipoprotein C-II (Apoc2) from Grammomys surdaster (African woodland thicket rat).